The following is a 428-amino-acid chain: Enolase (428 aa).

Gln-163 serves as a coordination point for (2R)-2-phosphoglycerate. Catalysis depends on Glu-205, which acts as the Proton donor. 3 residues coordinate Mg(2+): Asp-242, Glu-285, and Asp-312. 4 residues coordinate (2R)-2-phosphoglycerate: Lys-337, Arg-366, Ser-367, and Lys-388. Catalysis depends on Lys-337, which acts as the Proton acceptor.

It belongs to the enolase family. As to quaternary structure, component of the RNA degradosome, a multiprotein complex involved in RNA processing and mRNA degradation. The cofactor is Mg(2+).

The protein resides in the cytoplasm. It localises to the secreted. Its subcellular location is the cell surface. It catalyses the reaction (2R)-2-phosphoglycerate = phosphoenolpyruvate + H2O. The protein operates within carbohydrate degradation; glycolysis; pyruvate from D-glyceraldehyde 3-phosphate: step 4/5. Its function is as follows. Catalyzes the reversible conversion of 2-phosphoglycerate (2-PG) into phosphoenolpyruvate (PEP). It is essential for the degradation of carbohydrates via glycolysis. In Halorhodospira halophila (strain DSM 244 / SL1) (Ectothiorhodospira halophila (strain DSM 244 / SL1)), this protein is Enolase.